The chain runs to 29 residues: Beta-hexatoxin-Mr1a (29 aa).

3 cysteine pairs are disulfide-bonded: Cys2-Cys16, Cys9-Cys21, and Cys15-Cys26.

Belongs to the neurotoxin 15 family. 01 (magi-5) subfamily. Expressed by the venom gland.

The protein localises to the secreted. Functionally, insect and vertebrate active toxin. Binds at site 4 of mammalian voltage-gated sodium channels and shifts the activation voltage of the mammalian rNav1.2a (SCN2A) channel to more hyperpolarized voltages, whereas the insect channel, DmNav1 (para), is not affected. Causes temporary paralysis when injected into lepidopteran larvae at 8.6 nmol/g. A low intracranial injection dose into mice causes lacrimation, closure of the eyes and sweating. A high injection dose causes extensive lacrimation and death. In Macrothele raveni (Funnel-web spider), this protein is Beta-hexatoxin-Mr1a.